The following is a 522-amino-acid chain: 5,6-dihydroxyindole-2-carboxylic acid oxidase (522 aa).

The first 21 residues, methionine 1 to alanine 21, serve as a signal peptide directing secretion. The Lumenal, melanosome portion of the chain corresponds to glutamine 22–threonine 470. 5 disulfide bridges follow: cysteine 27–cysteine 38, cysteine 39–cysteine 59, cysteine 50–cysteine 89, cysteine 91–cysteine 100, and cysteine 103–cysteine 112. Residues asparagine 164 and asparagine 171 are each glycosylated (N-linked (GlcNAc...) asparagine). 3 residues coordinate Zn(2+): histidine 182, histidine 205, and histidine 214. 2 disulfides stabilise this stretch: cysteine 248–cysteine 251 and cysteine 280–cysteine 293. Residue asparagine 294 is glycosylated (N-linked (GlcNAc...) asparagine). Zn(2+) contacts are provided by histidine 367 and histidine 371. Asparagine 375 carries N-linked (GlcNAc...) asparagine glycosylation. Residue histidine 394 coordinates Zn(2+). A helical membrane pass occupies residues valine 471–valine 491. Residues histidine 492–valine 522 lie on the Cytoplasmic side of the membrane.

The protein belongs to the tyrosinase family. It depends on Cu(2+) as a cofactor. Requires Zn(2+) as cofactor.

It localises to the melanosome membrane. The enzyme catalyses 2 5,6-dihydroxyindole-2-carboxylate + O2 = 2 indole-5,6-quinone-2-carboxylate + 2 H2O. Its pathway is pigment biosynthesis; melanin biosynthesis. In terms of biological role, plays a role in melanin biosynthesis. Catalyzes the oxidation of 5,6-dihydroxyindole-2-carboxylic acid (DHICA) into indole-5,6-quinone-2-carboxylic acid. May regulate or influence the type of melanin synthesized. Also to a lower extent, capable of hydroxylating tyrosine and producing melanin. This is 5,6-dihydroxyindole-2-carboxylic acid oxidase (tyrp1) from Carassius auratus (Goldfish).